A 125-amino-acid chain; its full sequence is Ino eighty subunit 5 (125 aa).

Thr124 is subject to Phosphothreonine.

As to quaternary structure, component of the chromatin-remodeling INO80 complex, at least composed of ARP4, ARP5, ARP8, RVB1, RVB2, TAF14, NHP10, IES1, IES3, IES4, IES6, ACT1, IES2, IES5 and INO80.

It localises to the nucleus. This chain is Ino eighty subunit 5 (IES5), found in Saccharomyces cerevisiae (strain ATCC 204508 / S288c) (Baker's yeast).